Here is an 88-residue protein sequence, read N- to C-terminus: Small ribosomal subunit protein bS20 (88 aa).

Residues 1–27 are disordered; sequence MANSKSAKKRALQSEKRRQHNASRRSM.

It belongs to the bacterial ribosomal protein bS20 family.

Binds directly to 16S ribosomal RNA. The protein is Small ribosomal subunit protein bS20 of Shewanella frigidimarina (strain NCIMB 400).